Consider the following 421-residue polypeptide: Imidazolonepropionase (421 aa).

Residues His80 and His82 each contribute to the Fe(3+) site. Residues His80 and His82 each contribute to the Zn(2+) site. 4-imidazolone-5-propanoate contacts are provided by Arg89, Tyr152, and His185. Residue Tyr152 participates in N-formimidoyl-L-glutamate binding. Residue His249 coordinates Fe(3+). Position 249 (His249) interacts with Zn(2+). Glu252 provides a ligand contact to 4-imidazolone-5-propanoate. Asp324 is a Fe(3+) binding site. Asp324 contributes to the Zn(2+) binding site. N-formimidoyl-L-glutamate contacts are provided by Asn326 and Gly328. Residue Ser329 coordinates 4-imidazolone-5-propanoate.

The protein belongs to the metallo-dependent hydrolases superfamily. HutI family. Zn(2+) serves as cofactor. The cofactor is Fe(3+).

It is found in the cytoplasm. The catalysed reaction is 4-imidazolone-5-propanoate + H2O = N-formimidoyl-L-glutamate. It functions in the pathway amino-acid degradation; L-histidine degradation into L-glutamate; N-formimidoyl-L-glutamate from L-histidine: step 3/3. Its function is as follows. Catalyzes the hydrolytic cleavage of the carbon-nitrogen bond in imidazolone-5-propanoate to yield N-formimidoyl-L-glutamate. It is the third step in the universal histidine degradation pathway. The sequence is that of Imidazolonepropionase from Bacillus velezensis (strain DSM 23117 / BGSC 10A6 / LMG 26770 / FZB42) (Bacillus amyloliquefaciens subsp. plantarum).